The primary structure comprises 128 residues: Large ribosomal subunit protein uL22 (128 aa).

Belongs to the universal ribosomal protein uL22 family. Part of the 50S ribosomal subunit.

Functionally, this protein binds specifically to 23S rRNA; its binding is stimulated by other ribosomal proteins, e.g. L4, L17, and L20. It is important during the early stages of 50S assembly. It makes multiple contacts with different domains of the 23S rRNA in the assembled 50S subunit and ribosome. Its function is as follows. The globular domain of the protein is located near the polypeptide exit tunnel on the outside of the subunit, while an extended beta-hairpin is found that lines the wall of the exit tunnel in the center of the 70S ribosome. In Nitrobacter winogradskyi (strain ATCC 25391 / DSM 10237 / CIP 104748 / NCIMB 11846 / Nb-255), this protein is Large ribosomal subunit protein uL22.